The primary structure comprises 293 residues: Putative immediate early glycoprotein (293 aa).

A signal peptide spans 1-21 (MKKLTMESLSVYIFVMGVCFT). Residues N23, N55, N83, N120, N150, N156, N168, N212, and N249 are each glycosylated (N-linked (GlcNAc...) asparagine; by host). A helical transmembrane segment spans residues 262–282 (LFFLAGGAFTMLLLLCCLSMI).

The protein belongs to the herpesviridae immediate early glycoprotein family.

It localises to the membrane. This is Putative immediate early glycoprotein (U18) from Human herpesvirus 6A (strain Uganda-1102) (HHV-6 variant A).